We begin with the raw amino-acid sequence, 377 residues long: All-trans-retinol dehydrogenase [NAD(+)] ADH4 (377 aa).

Cys-47 is a Zn(2+) binding site. Thr-49 lines the NAD(+) pocket. Residues His-68, Cys-98, Cys-101, Cys-104, Cys-112, and Cys-179 each coordinate Zn(2+). NAD(+) contacts are provided by residues 204-209 (GLGCVG), Asp-228, Lys-233, 297-299 (VGA), 320-322 (TFF), and Arg-372.

It belongs to the zinc-containing alcohol dehydrogenase family. Class-II subfamily. Dimer. Zn(2+) is required as a cofactor. As to expression, liver specific.

It is found in the cytoplasm. The catalysed reaction is all-trans-retinol + NAD(+) = all-trans-retinal + NADH + H(+). It carries out the reaction 9-cis-retinol + NAD(+) = 9-cis-retinal + NADH + H(+). It catalyses the reaction 20-hydroxy-(5Z,8Z,11Z,14Z)-eicosatetraenoate + NAD(+) = 20-oxo-(5Z,8Z,11Z,14Z)-eicosatetraenoate + NADH + H(+). The enzyme catalyses 20-oxo-(5Z,8Z,11Z,14Z)-eicosatetraenoate + NAD(+) + H2O = (5Z,8Z,11Z,14Z)-eicosatetraenedioate + NADH + 2 H(+). The catalysed reaction is 1,4-benzoquinone + NADH + H(+) = hydroquinone + NAD(+). With respect to regulation, oxidation of 20-HETE is inhibited by low concentrations of N-heptylformamide. Oxidation of 20-HETE is a decreased by 55-65% by either all-trans-retinol or all-trans-retinoic acid. Strongly inhibited by omega-hydroxy fatty acids. Its function is as follows. Catalyzes the NAD-dependent oxidation of either all-trans-retinol or 9-cis-retinol. Also oxidizes long chain omega-hydroxy fatty acids, such as 20-HETE, producing both the intermediate aldehyde, 20-oxoarachidonate and the end product, a dicarboxylic acid, (5Z,8Z,11Z,14Z)-eicosatetraenedioate. Also catalyzes the reduction of benzoquinones. The chain is All-trans-retinol dehydrogenase [NAD(+)] ADH4 from Mus musculus (Mouse).